Reading from the N-terminus, the 180-residue chain is MASYLAEEYKEKVAPALAEKFDYKSSMQIPKIDKIVLNMGVGDAVSNAKNLDEAVEELTLISGQKPLITKAKKSIANFRLREGMSIGAKVTLRGDRMYDFLYKLINVSLPRVRDFRGVSTRSFDGRGNYTLGVKEQLIFLEIDFDKVNRTRGLDIVIVTTANTDEEARELLTQFGMPFAR.

It belongs to the universal ribosomal protein uL5 family. As to quaternary structure, part of the 50S ribosomal subunit; part of the 5S rRNA/L5/L18/L25 subcomplex. Contacts the 5S rRNA and the P site tRNA. Forms a bridge to the 30S subunit in the 70S ribosome.

Functionally, this is one of the proteins that bind and probably mediate the attachment of the 5S RNA into the large ribosomal subunit, where it forms part of the central protuberance. In the 70S ribosome it contacts protein S13 of the 30S subunit (bridge B1b), connecting the 2 subunits; this bridge is implicated in subunit movement. Contacts the P site tRNA; the 5S rRNA and some of its associated proteins might help stabilize positioning of ribosome-bound tRNAs. This chain is Large ribosomal subunit protein uL5, found in Lactobacillus helveticus (strain DPC 4571).